The following is a 462-amino-acid chain: ATP synthase subunit beta 1 (462 aa).

152–159 (GGAGVGKT) is an ATP binding site.

Belongs to the ATPase alpha/beta chains family. In terms of assembly, F-type ATPases have 2 components, CF(1) - the catalytic core - and CF(0) - the membrane proton channel. CF(1) has five subunits: alpha(3), beta(3), gamma(1), delta(1), epsilon(1). CF(0) has four main subunits: a(1), b(1), b'(1) and c(9-12).

The protein resides in the cell inner membrane. It carries out the reaction ATP + H2O + 4 H(+)(in) = ADP + phosphate + 5 H(+)(out). In terms of biological role, produces ATP from ADP in the presence of a proton gradient across the membrane. The catalytic sites are hosted primarily by the beta subunits. This is ATP synthase subunit beta 1 from Dinoroseobacter shibae (strain DSM 16493 / NCIMB 14021 / DFL 12).